The sequence spans 400 residues: LIM/homeobox protein Lhx3 (400 aa).

LIM zinc-binding domains are found at residues 34-84 (CAGC…CKDD) and 93-147 (CAAC…CKAD). Serine 74 bears the Phosphoserine mark. Positions 160-219 (AKRPRTTITAKQLETLKSAYNTSPKPARHVREQLSSETGLDMRVVQVWFQNRRAKEKRLK) form a DNA-binding region, homeobox. 2 disordered regions span residues 215–280 (EKRL…SSLG) and 297–400 (TLDH…HAQF). A Phosphotyrosine modification is found at tyrosine 230. Serine 237 and serine 241 each carry phosphoserine. 2 stretches are compositionally biased toward pro residues: residues 319–334 (GIPPSPAAPQSLPGPQ) and 352–361 (SGPPGGPPPM). Residues 368 to 380 (GPSSDLSTESSSG) show a composition bias toward polar residues.

Interacts with POU1F1. At neuronal promoters, interacts with LDB1, in motor neurons LDB1 is displaced by ISL1 and a ternary complex is formed in which ISL1 contacts both LHX3 and LDB1; allosteric structural changes in the DNA binding domain of LHX3, induced by the ISL1-LHX3 interaction, may explain differences in sequence specificity of the different complexes. Interacts with LDB2. May interact with CITED2/MRG1. Mostly expressed in the pituitary anterior and intermediate lobes. It is also expressed in the pineal gland and transiently in the primordia of motor neurons including the spinal cord, pons and medulla oblongata.

It is found in the nucleus. Its function is as follows. Transcription factor. Recognizes and binds to the consensus sequence motif 5'-AATTAATTA-3' in the regulatory elements of target genes, such as glycoprotein hormones alpha chain CGA and visual system homeobox CHX10, positively modulating transcription; transcription can be co-activated by LDB2. Synergistically enhances transcription from the prolactin promoter in cooperation with POU1F1/Pit-1. Required for the establishment of the specialized cells of the pituitary gland and the nervous system. Involved in the development of interneurons and motor neurons in cooperation with LDB1 and ISL1. In Mus musculus (Mouse), this protein is LIM/homeobox protein Lhx3 (Lhx3).